The primary structure comprises 72 residues: Translation initiation factor IF-1 (72 aa).

Residues 1–72 (MSKDDCIEFE…TKGRIIYRMK (72 aa)) enclose the S1-like domain.

It belongs to the IF-1 family. Component of the 30S ribosomal translation pre-initiation complex which assembles on the 30S ribosome in the order IF-2 and IF-3, IF-1 and N-formylmethionyl-tRNA(fMet); mRNA recruitment can occur at any time during PIC assembly.

It is found in the cytoplasm. Functionally, one of the essential components for the initiation of protein synthesis. Stabilizes the binding of IF-2 and IF-3 on the 30S subunit to which N-formylmethionyl-tRNA(fMet) subsequently binds. Helps modulate mRNA selection, yielding the 30S pre-initiation complex (PIC). Upon addition of the 50S ribosomal subunit IF-1, IF-2 and IF-3 are released leaving the mature 70S translation initiation complex. The polypeptide is Translation initiation factor IF-1 (Xylella fastidiosa (strain Temecula1 / ATCC 700964)).